The chain runs to 81 residues: U17-lycotoxin-Ls1a (81 aa).

A signal peptide spans 1–22 (MSSKVQAVLLLVGVITFLAVHA). A propeptide spanning residues 23 to 34 (QEELSENTESER) is cleaved from the precursor. 3 disulfide bridges follow: Cys36–Cys51, Cys50–Cys67, and Cys58–Cys65.

This sequence belongs to the neurotoxin 02 (plectoxin) family. In terms of tissue distribution, expressed by the venom gland.

The protein localises to the secreted. This chain is U17-lycotoxin-Ls1a, found in Lycosa singoriensis (Wolf spider).